A 524-amino-acid chain; its full sequence is Glucose-6-phosphate 1-dehydrogenase (524 aa).

A Phosphoserine modification is found at Ser20. NADP(+)-binding positions include Gly42–Lys49, Arg76, and Lys175. D-glucose 6-phosphate contacts are provided by residues Lys175, His205 to Lys209, Glu243, and Asp262. Catalysis depends on His267, which acts as the Proton acceptor. Arg362 provides a ligand contact to NADP(+). Residues Lys365 and Arg370 each contribute to the D-glucose 6-phosphate site. NADP(+) is bound by residues Lys371, Arg375, and Arg398. Gln400 is a D-glucose 6-phosphate binding site. Residues Tyr406–Lys408, Asp426–Thr428, Arg492, Tyr508, and Trp514 contribute to the NADP(+) site.

It belongs to the glucose-6-phosphate dehydrogenase family.

Its subcellular location is the cytoplasm. The protein localises to the cytosol. It carries out the reaction D-glucose 6-phosphate + NADP(+) = 6-phospho-D-glucono-1,5-lactone + NADPH + H(+). The protein operates within carbohydrate degradation; pentose phosphate pathway; D-ribulose 5-phosphate from D-glucose 6-phosphate (oxidative stage): step 1/3. Its function is as follows. Cytosolic glucose-6-phosphate dehydrogenase that catalyzes the first and rate-limiting step of the oxidative branch within the pentose phosphate pathway/shunt, an alternative route to glycolysis for the dissimilation of carbohydrates and a major source of reducing power and metabolic intermediates for fatty acid and nucleic acid biosynthetic processes. In Drosophila melanogaster (Fruit fly), this protein is Glucose-6-phosphate 1-dehydrogenase.